Consider the following 85-residue polypeptide: Cell division topological specificity factor (85 aa).

It belongs to the MinE family.

Its function is as follows. Prevents the cell division inhibition by proteins MinC and MinD at internal division sites while permitting inhibition at polar sites. This ensures cell division at the proper site by restricting the formation of a division septum at the midpoint of the long axis of the cell. In Dechloromonas aromatica (strain RCB), this protein is Cell division topological specificity factor.